A 434-amino-acid chain; its full sequence is Phosphomethylpyrimidine synthase 2 (434 aa).

Residues Met94, Tyr123, His162, 184–186 (SRG), 225–228 (NAMR), and Glu264 each bind substrate. His268 contacts Zn(2+). Tyr291 lines the substrate pocket. His332 is a Zn(2+) binding site. [4Fe-4S] cluster-binding residues include Cys408, Cys411, and Cys415.

Belongs to the ThiC family. The cofactor is [4Fe-4S] cluster.

The catalysed reaction is 5-amino-1-(5-phospho-beta-D-ribosyl)imidazole + S-adenosyl-L-methionine = 4-amino-2-methyl-5-(phosphooxymethyl)pyrimidine + CO + 5'-deoxyadenosine + formate + L-methionine + 3 H(+). It functions in the pathway cofactor biosynthesis; thiamine diphosphate biosynthesis. Catalyzes the synthesis of the hydroxymethylpyrimidine phosphate (HMP-P) moiety of thiamine from aminoimidazole ribotide (AIR) in a radical S-adenosyl-L-methionine (SAM)-dependent reaction. In Methanosphaera stadtmanae (strain ATCC 43021 / DSM 3091 / JCM 11832 / MCB-3), this protein is Phosphomethylpyrimidine synthase 2.